An 851-amino-acid polypeptide reads, in one-letter code: MLQTLISKFLGSRNNKLIKHYLKEVQAINALESTYNTLSDAQLQEAFMQLRKLIQNGETSLQSILHKSFAITREASKRVLGMRHFDVQLIGGMALNDGRIAEMKTGEGKTLVATLAVCLNALCGRGVHVVTVNDYLANRDAKELEPLYNFLGFEVGIITSEVRDDNERLQAYACDIVYGTNNEFGFDYLRDNMKYDLSQKVQGEHYFAIIDEVDSILIDEARTPLIISGPVNRTLEHYQLANSVAQRLKNEEDFSIDEKNRVILLNEEGIKKAESLFKVDNLYSIENAALSHHLDQALKANYLFIKDKDYVVQNDEVVIVDEFTGRLSEGRRFSEGLHQAIEAKEKVDIKEESQTLADITFQNYFRLYEKLSGMTGTAQTEASEFLQIYNLEVVSIPTNVPVQRKDLNDLIYKSEKEKFNAVIDKIQELYKKGQPVLVGTASIEKSEILHELLKKHRIPHTVLNAKQHTKEAEIIKDAGVKGAVTIATNMAGRGVDIKINDEIRELGGLYIIGTERHESRRIDNQLRGRAGRQGDPGISQFYLSLEDSLLRIFGSDKIKGIMERLGLKEGEHIESGLVTRSVESAQKKVENLHFESRKHLLEYDDVANEQRKAVYKLRNELLDENCSLQERISTNRELTAQSMLYKAQILPGDDSSNFNIDSLKAQINEELGLEIGNCENLDYDELLEKLITQMNTAYEEKMSKLEESQRAQIERIIYLQVLDSSWREHLYTMDNLKTGIGLRGYNQKDPLVEYKKESYNLFLEFVENLKFETTKMLQIIQLRDKEEEVANKMIKNLQDELEENLQDLNTNMDSTPVRKNKIARNDPCPCGSGKKYKVCHGKSGPKSGLLA.

Residues glutamine 88, 106–110 (GEGKT), and aspartate 496 each bind ATP. The Zn(2+) site is built by cysteine 828, cysteine 830, cysteine 839, and histidine 840.

Belongs to the SecA family. In terms of assembly, monomer and homodimer. Part of the essential Sec protein translocation apparatus which comprises SecA, SecYEG and auxiliary proteins SecDF-YajC and YidC. It depends on Zn(2+) as a cofactor.

It is found in the cell inner membrane. The protein localises to the cytoplasm. The enzyme catalyses ATP + H2O + cellular proteinSide 1 = ADP + phosphate + cellular proteinSide 2.. Functionally, part of the Sec protein translocase complex. Interacts with the SecYEG preprotein conducting channel. Has a central role in coupling the hydrolysis of ATP to the transfer of proteins into and across the cell membrane, serving as an ATP-driven molecular motor driving the stepwise translocation of polypeptide chains across the membrane. The chain is Protein translocase subunit SecA from Helicobacter hepaticus (strain ATCC 51449 / 3B1).